Reading from the N-terminus, the 121-residue chain is Large ribosomal subunit protein bL19 (121 aa).

This sequence belongs to the bacterial ribosomal protein bL19 family.

Functionally, this protein is located at the 30S-50S ribosomal subunit interface and may play a role in the structure and function of the aminoacyl-tRNA binding site. This Symbiobacterium thermophilum (strain DSM 24528 / JCM 14929 / IAM 14863 / T) protein is Large ribosomal subunit protein bL19.